The following is a 402-amino-acid chain: UPF0597 protein THA_1286 (402 aa).

Belongs to the UPF0597 family.

The polypeptide is UPF0597 protein THA_1286 (Thermosipho africanus (strain TCF52B)).